The primary structure comprises 177 residues: Cell division inhibitor SulA (177 aa).

Residues 112–118 form a ftsZ binding region; sequence ALASGNY. The tract at residues 170 to 177 is lon protease binding; it reads KIHSIHYH.

This sequence belongs to the SulA family. In terms of assembly, interacts with FtsZ. Post-translationally, is rapidly cleaved and degraded by the Lon protease once DNA damage is repaired.

Its function is as follows. Component of the SOS system and an inhibitor of cell division. Accumulation of SulA causes rapid cessation of cell division and the appearance of long, non-septate filaments. In the presence of GTP, binds a polymerization-competent form of FtsZ in a 1:1 ratio, thus inhibiting FtsZ polymerization and therefore preventing it from participating in the assembly of the Z ring. This mechanism prevents the premature segregation of damaged DNA to daughter cells during cell division. The protein is Cell division inhibitor SulA of Photorhabdus laumondii subsp. laumondii (strain DSM 15139 / CIP 105565 / TT01) (Photorhabdus luminescens subsp. laumondii).